The sequence spans 211 residues: ATP-dependent Clp protease proteolytic subunit (211 aa).

Ser114 functions as the Nucleophile in the catalytic mechanism. His139 is an active-site residue.

It belongs to the peptidase S14 family. In terms of assembly, fourteen ClpP subunits assemble into 2 heptameric rings which stack back to back to give a disk-like structure with a central cavity, resembling the structure of eukaryotic proteasomes.

It is found in the cytoplasm. It catalyses the reaction Hydrolysis of proteins to small peptides in the presence of ATP and magnesium. alpha-casein is the usual test substrate. In the absence of ATP, only oligopeptides shorter than five residues are hydrolyzed (such as succinyl-Leu-Tyr-|-NHMec, and Leu-Tyr-Leu-|-Tyr-Trp, in which cleavage of the -Tyr-|-Leu- and -Tyr-|-Trp bonds also occurs).. Cleaves peptides in various proteins in a process that requires ATP hydrolysis. Has a chymotrypsin-like activity. Plays a major role in the degradation of misfolded proteins. The polypeptide is ATP-dependent Clp protease proteolytic subunit (Pseudomonas fluorescens (strain SBW25)).